A 294-amino-acid chain; its full sequence is Thymidylate synthase (294 aa).

Residues arginine 31 and 156-157 each bind dUMP; that span reads RR. Residue cysteine 176 is the Nucleophile of the active site. Residues 196–199, asparagine 207, and 237–239 contribute to the dUMP site; these read RSAD and HIY. Residue aspartate 199 participates in (6R)-5,10-methylene-5,6,7,8-tetrahydrofolate binding. Position 293 (alanine 293) interacts with (6R)-5,10-methylene-5,6,7,8-tetrahydrofolate.

The protein belongs to the thymidylate synthase family. In terms of assembly, homodimer.

It carries out the reaction dUMP + (6R)-5,10-methylene-5,6,7,8-tetrahydrofolate = 7,8-dihydrofolate + dTMP. Its pathway is pyrimidine metabolism; dTTP biosynthesis. In Saimiri sciureus (Common squirrel monkey), this protein is Thymidylate synthase (70).